The sequence spans 319 residues: Ankyrin repeat domain-containing protein 1 (319 aa).

A coiled-coil region spans residues Lys61–Ile89. 5 ANK repeats span residues Tyr152 to Phe181, Leu185 to Ala214, Leu218 to Ala247, Glu251 to Val280, and Ala284 to Arg315.

As to quaternary structure, interacts with TTN/titin and YBX1.

Its subcellular location is the nucleus. Functionally, may play an important role in endothelial cell activation. May act as a nuclear transcription factor that negatively regulates the expression of cardiac genes. The protein is Ankyrin repeat domain-containing protein 1 (ANKRD1) of Bos taurus (Bovine).